Consider the following 335-residue polypeptide: MWQLLATLSCLLVLTSARSSLHFPPLSDEMVNYVNKQNTTWKAGHNFYNVDLSYVKKLCGAILGGPKLPQRDAFAADMVLPDSFDAREQWPNCPTIKEIRDQGSCGSCWAFGAVEAISDRICIHSKGRVNVEVSAEDMLTCCGSECGDGCNGGFPSGAWNFWTKKGLVSGGLYDSHVGCRPYSIPPCEHHVNGSRPPCTGEGDTPKCSKICEPGYSPSYKDDKHFGCSSYSVSSNEKEIMAEIYKNGPVEGAFSVYSDFLLYKSGVYQHVSGEMMGGHAIRILGWGVENDTPYWLVGNSWNTDWGDKGFFKILRGQDHCGIESEIVAGMPCAHQH.

Positions 1–19 (MWQLLATLSCLLVLTSARS) are cleaved as a signal peptide. Residues 20-79 (SLHFPPLSDEMVNYVNKQNTTWKAGHNFYNVDLSYVKKLCGAILGGPKLPQRDAFAADMV) constitute a propeptide, activation peptide. 6 disulfide bridges follow: Cys93–Cys122, Cys105–Cys150, Cys141–Cys207, Cys142–Cys146, Cys179–Cys211, and Cys187–Cys198. Cys108 is a catalytic residue. An N-linked (GlcNAc...) asparagine glycan is attached at Asn192. Position 220 is an N6-acetyllysine (Lys220). Catalysis depends on residues His278 and Asn298. Residues 333–335 (HQH) constitute a propeptide that is removed on maturation.

The protein belongs to the peptidase C1 family. Dimer of a heavy chain and a light chain cross-linked by a disulfide bond. Interacts with SRPX2. Directly interacts with SHKBP1.

It is found in the lysosome. Its subcellular location is the melanosome. It localises to the secreted. The protein localises to the extracellular space. The protein resides in the apical cell membrane. The enzyme catalyses Hydrolysis of proteins with broad specificity for peptide bonds. Preferentially cleaves -Arg-Arg-|-Xaa bonds in small molecule substrates (thus differing from cathepsin L). In addition to being an endopeptidase, shows peptidyl-dipeptidase activity, liberating C-terminal dipeptides.. Thiol protease which is believed to participate in intracellular degradation and turnover of proteins. Cleaves matrix extracellular phosphoglycoprotein MEPE. Involved in the solubilization of cross-linked TG/thyroglobulin in the thyroid follicle lumen. Has also been implicated in tumor invasion and metastasis. This is Cathepsin B (CTSB) from Ovis aries (Sheep).